Consider the following 570-residue polypeptide: Proline--tRNA ligase (570 aa).

This sequence belongs to the class-II aminoacyl-tRNA synthetase family. ProS type 1 subfamily. As to quaternary structure, homodimer.

The protein resides in the cytoplasm. It carries out the reaction tRNA(Pro) + L-proline + ATP = L-prolyl-tRNA(Pro) + AMP + diphosphate. Its function is as follows. Catalyzes the attachment of proline to tRNA(Pro) in a two-step reaction: proline is first activated by ATP to form Pro-AMP and then transferred to the acceptor end of tRNA(Pro). As ProRS can inadvertently accommodate and process non-cognate amino acids such as alanine and cysteine, to avoid such errors it has two additional distinct editing activities against alanine. One activity is designated as 'pretransfer' editing and involves the tRNA(Pro)-independent hydrolysis of activated Ala-AMP. The other activity is designated 'posttransfer' editing and involves deacylation of mischarged Ala-tRNA(Pro). The misacylated Cys-tRNA(Pro) is not edited by ProRS. This chain is Proline--tRNA ligase, found in Shewanella sp. (strain ANA-3).